A 312-amino-acid polypeptide reads, in one-letter code: Malate dehydrogenase (312 aa).

NAD(+) is bound by residues 7–13 (GAAGGIG) and Asp34. Substrate contacts are provided by Arg81 and Arg87. Residues Asn94 and 117–119 (ITN) each bind NAD(+). Residues Asn119 and Arg153 each contribute to the substrate site. His177 serves as the catalytic Proton acceptor. Met227 serves as a coordination point for NAD(+).

Belongs to the LDH/MDH superfamily. MDH type 1 family. Homodimer.

It carries out the reaction (S)-malate + NAD(+) = oxaloacetate + NADH + H(+). In terms of biological role, catalyzes the reversible oxidation of malate to oxaloacetate. This is Malate dehydrogenase from Escherichia coli O139:H28 (strain E24377A / ETEC).